The primary structure comprises 418 residues: Protein fuzzy homolog (418 aa).

It belongs to the fuzzy family. As to quaternary structure, interacts with rsg1. Interacts with intu and wdpcp; fuz, intu and wdpcp probably form the core CPLANE (ciliogenesis and planar polarity effectors) complex.

Its subcellular location is the cytoplasm. The protein resides in the cytoskeleton. It is found in the cilium basal body. Probable planar cell polarity effector involved in cilium biogenesis. Proposed to function as core component of the CPLANE (ciliogenesis and planar polarity effectors) complex involved in the recruitment of peripheral IFT-A proteins to basal bodies. May regulate protein and membrane transport to the cilium. May control the organization of the apical actin cytoskeleton, which is essential for the normal orientation of elongating ciliary microtubules. This is Protein fuzzy homolog (fuz) from Xenopus tropicalis (Western clawed frog).